Consider the following 295-residue polypeptide: 4-hydroxy-tetrahydrodipicolinate synthase (295 aa).

T46 is a pyruvate binding site. Y135 (proton donor/acceptor) is an active-site residue. K164 functions as the Schiff-base intermediate with substrate in the catalytic mechanism. I205 contributes to the pyruvate binding site.

This sequence belongs to the DapA family. As to quaternary structure, homotetramer; dimer of dimers.

The protein localises to the cytoplasm. The catalysed reaction is L-aspartate 4-semialdehyde + pyruvate = (2S,4S)-4-hydroxy-2,3,4,5-tetrahydrodipicolinate + H2O + H(+). The protein operates within amino-acid biosynthesis; L-lysine biosynthesis via DAP pathway; (S)-tetrahydrodipicolinate from L-aspartate: step 3/4. Functionally, catalyzes the condensation of (S)-aspartate-beta-semialdehyde [(S)-ASA] and pyruvate to 4-hydroxy-tetrahydrodipicolinate (HTPA). The protein is 4-hydroxy-tetrahydrodipicolinate synthase of Wolinella succinogenes (strain ATCC 29543 / DSM 1740 / CCUG 13145 / JCM 31913 / LMG 7466 / NCTC 11488 / FDC 602W) (Vibrio succinogenes).